Consider the following 790-residue polypeptide: Accumulates dyads protein 3 (790 aa).

The disordered stretch occupies residues 8–122; that stretch reads LNKPESLKEQ…NTLKSPNKFL (115 aa). A compositionally biased stretch (basic and acidic residues) spans 39–49; sequence PESKPFRERRS. Polar residues-rich tracts occupy residues 50 to 78 and 89 to 108; these read QTWI…ISKL and ESWA…TLEN. Coiled coils occupy residues 241–328, 361–430, 477–498, and 540–658; these read ISKE…REEK, LVSE…RLND, KNLE…LEKN, and QQFR…LKKL.

Interacts directly with SSP1. Probable component of a SPB complex composed of ADY3, SSP1, DON1, MPC54, SPO21/MPC70, NUD1 and CNM67. Phosphorylated.

The protein resides in the prospore membrane. It is found in the cytoplasm. Its subcellular location is the cytoskeleton. It localises to the microtubule organizing center. The protein localises to the spindle pole body. Its function is as follows. Involved in the pathway that organizes the prospore membrane (PSM) during sporulation. Mediates the assembly of the DON1 ring structure at the leading edge of PSM during meiosis II. May constitute a physical link between SSP1-containing PSM precursors and the spindle pole body (SPB) and may facilitate the recruitment of other factors that are required to promote spore wall formation. The chain is Accumulates dyads protein 3 (ADY3) from Saccharomyces cerevisiae (strain ATCC 204508 / S288c) (Baker's yeast).